The primary structure comprises 462 residues: L-seryl-tRNA(Sec) selenium transferase (462 aa).

The residue at position 292 (Lys-292) is an N6-(pyridoxal phosphate)lysine.

This sequence belongs to the SelA family. Pyridoxal 5'-phosphate is required as a cofactor.

Its subcellular location is the cytoplasm. The enzyme catalyses L-seryl-tRNA(Sec) + selenophosphate + H(+) = L-selenocysteinyl-tRNA(Sec) + phosphate. Its pathway is aminoacyl-tRNA biosynthesis; selenocysteinyl-tRNA(Sec) biosynthesis; selenocysteinyl-tRNA(Sec) from L-seryl-tRNA(Sec) (bacterial route): step 1/1. Its function is as follows. Converts seryl-tRNA(Sec) to selenocysteinyl-tRNA(Sec) required for selenoprotein biosynthesis. The protein is L-seryl-tRNA(Sec) selenium transferase of Clostridium perfringens (strain ATCC 13124 / DSM 756 / JCM 1290 / NCIMB 6125 / NCTC 8237 / Type A).